The chain runs to 125 residues: Large ribosomal subunit protein bL12 (125 aa).

Belongs to the bacterial ribosomal protein bL12 family. Homodimer. Part of the ribosomal stalk of the 50S ribosomal subunit. Forms a multimeric L10(L12)X complex, where L10 forms an elongated spine to which 2 to 4 L12 dimers bind in a sequential fashion. Binds GTP-bound translation factors.

In terms of biological role, forms part of the ribosomal stalk which helps the ribosome interact with GTP-bound translation factors. Is thus essential for accurate translation. This chain is Large ribosomal subunit protein bL12, found in Azorhizobium caulinodans (strain ATCC 43989 / DSM 5975 / JCM 20966 / LMG 6465 / NBRC 14845 / NCIMB 13405 / ORS 571).